The sequence spans 67 residues: Beta-defensin 1 (67 aa).

The N-terminal stretch at 1–22 is a signal peptide; it reads MRIHYLLFAVLFLFLMPVPGEG. 3 disulfide bridges follow: Cys-33/Cys-62, Cys-40/Cys-55, and Cys-45/Cys-63.

As to quaternary structure, monomer. Homodimer. Highly expressed in tongue, nasopharyngeal mucosa and skin, and to a lower extent in the Eustachian tube, lung and trachea.

Its subcellular location is the secreted. It localises to the membrane. Its function is as follows. Has antibacterial activity against Gram-positive bacterium S.pneumoniae Serotype 14. Is also active against Gram-negative bacteria M.catarrhalis 1857, and non-typeable H.influenzae strains 86-028NP and 1128. Has antifungal activity against C.albicans. May have a role in maintaining sterility in the middle ear. May act as a ligand for C-C chemokine receptor CCR6. Positively regulates the sperm motility and bactericidal activity in a CCR6-dependent manner. Binds to CCR6 and triggers Ca2+ mobilization in the sperm which is important for its motility. The sequence is that of Beta-defensin 1 (DEFB1) from Chinchilla lanigera (Long-tailed chinchilla).